A 684-amino-acid polypeptide reads, in one-letter code: Cyclic nucleotide-gated channel alpha-1 (684 aa).

At 1-161 (MKTNIINTWH…PSGNTYYNWL (161 aa)) the chain is on the cytoplasmic side. The disordered stretch occupies residues 34–145 (ACSSFSDDDN…TKEKKEEEKK (112 aa)). Over residues 39–54 (SDDDNGSLSEESENED) the composition is skewed to acidic residues. Positions 105 to 145 (SKADDKNENKKDPEKKKKKEKEKEKKKKEEKTKEKKEEEKK) are enriched in basic and acidic residues. A helical membrane pass occupies residues 162–183 (FCITLPVMYNWTMIIARACFDE). The Extracellular segment spans residues 184–193 (LQSDYLEYWL). Residues 194 to 214 (IFDYVSDVVYLADMFVRTRTG) traverse the membrane as a helical segment. The Cytoplasmic portion of the chain corresponds to 215-239 (YLEQGLLVKDRMKLIEKYKANLQFK). A helical transmembrane segment spans residues 240–258 (LDVLSVIPTDLLYIKFGWN). At 259–263 (YPEIR) the chain is on the extracellular side. Residues 264–282 (LNRLLRISRMFEFFQRTET) form a helical membrane-spanning segment. Over 283–289 (RTNYPNI) the chain is Cytoplasmic. An ion conduction pathway region spans residues 287-395 (PNIFRISNLV…GNIGSMISNM (109 aa)). The chain crosses the membrane as a helical span at residues 290 to 313 (FRISNLVMYIVIIIHWNACVYYSI). Over 314-336 (SKAIGFGNDTWVYPDVNDPEFGR) the chain is Extracellular. Asn321 carries an N-linked (GlcNAc...) asparagine glycan. The next 2 helical transmembrane spans lie at 337–371 (LARK…IFVV) and 372–396 (VDFL…SNMN). The segment at 354 to 357 (TIGE) is selectivity filter. Positions 397 to 473 (AARAEFQSRV…DTLKKVRIFA (77 aa)) are C-linker. Residues 397-684 (AARAEFQSRV…ESELTESLQD (288 aa)) are Cytoplasmic-facing. A cyclic nucleotide-binding domain region spans residues 477 to 597 (AGLLVELVLK…EEKGRQILMK (121 aa)). Gly537, Ser540, Arg553, and Thr554 together coordinate 3',5'-cyclic GMP. Positions 553 and 554 each coordinate 3',5'-cyclic AMP. Residues 615–669 (LEEKVTRMEGSVDLLQTRFARILAEYESMQQKLKQRLTKVEKFLKPLIETEFSAL) are a coiled coil.

This sequence belongs to the cyclic nucleotide-gated cation channel (TC 1.A.1.5) family. CNGA1 subfamily. As to quaternary structure, forms heterotetrameric channels composed of CNGA1 and CNGB1 subunits with 3:1 stoichiometry. May also form cyclic nucleotide-activated homotetrameric channels, that are efficiently activated by saturating cGMP, but poorly activated by saturating cAMP compared to the heterotetramer with CNGB1. The channel binds Ca(2+)-bound CALM1 via CaM1 and CaM2 regions of the CNGB1 subunit; this interaction modulates the affinity of the channel for cNMPs in response to intracellular Ca(2+) levels. As to expression, rod cells in the retina and inner medulla of kidney.

The protein resides in the cell membrane. It carries out the reaction Ca(2+)(in) = Ca(2+)(out). The enzyme catalyses Na(+)(in) = Na(+)(out). The catalysed reaction is K(+)(in) = K(+)(out). It catalyses the reaction NH4(+)(in) = NH4(+)(out). It carries out the reaction Rb(+)(in) = Rb(+)(out). The enzyme catalyses Li(+)(in) = Li(+)(out). The catalysed reaction is Cs(+)(in) = Cs(+)(out). Its function is as follows. Pore-forming subunit of the rod cyclic nucleotide-gated channel. Mediates rod photoresponses at dim light converting transient changes in intracellular cGMP levels into electrical signals. In the dark, cGMP levels are high and keep the channel open enabling a steady inward current carried by Na(+) and Ca(2+) ions that leads to membrane depolarization and neurotransmitter release from synaptic terminals. Upon photon absorption cGMP levels decline leading to channel closure and membrane hyperpolarization that ultimately slows neurotransmitter release and signals the presence of light, the end point of the phototransduction cascade. Conducts cGMP- and cAMP-gated ion currents, with permeability for monovalent and divalent cations. The selectivity for Ca(2+) over Na(+) increases with cGMP concentrations, whereas the selectivity among monovalent ions is independent of the cGMP levels. The polypeptide is Cyclic nucleotide-gated channel alpha-1 (Cnga1) (Mus musculus (Mouse)).